Reading from the N-terminus, the 693-residue chain is UvrABC system protein B (693 aa).

Residues Glu-35 to Met-188 form the Helicase ATP-binding domain. Gly-48–Ser-55 serves as a coordination point for ATP. Positions Tyr-101 to Val-124 match the Beta-hairpin motif. Positions Gln-438–Thr-604 constitute a Helicase C-terminal domain. The 36-residue stretch at Val-648–Glu-683 folds into the UVR domain.

This sequence belongs to the UvrB family. Forms a heterotetramer with UvrA during the search for lesions. Interacts with UvrC in an incision complex.

The protein localises to the cytoplasm. Its function is as follows. The UvrABC repair system catalyzes the recognition and processing of DNA lesions. A damage recognition complex composed of 2 UvrA and 2 UvrB subunits scans DNA for abnormalities. Upon binding of the UvrA(2)B(2) complex to a putative damaged site, the DNA wraps around one UvrB monomer. DNA wrap is dependent on ATP binding by UvrB and probably causes local melting of the DNA helix, facilitating insertion of UvrB beta-hairpin between the DNA strands. Then UvrB probes one DNA strand for the presence of a lesion. If a lesion is found the UvrA subunits dissociate and the UvrB-DNA preincision complex is formed. This complex is subsequently bound by UvrC and the second UvrB is released. If no lesion is found, the DNA wraps around the other UvrB subunit that will check the other stand for damage. The polypeptide is UvrABC system protein B (Arthrobacter sp. (strain FB24)).